We begin with the raw amino-acid sequence, 622 residues long: Phosphoenolpyruvate carboxykinase [GTP] (622 aa).

Residues Arg86 and 220–222 (YGG) contribute to the substrate site. Residues Lys229 and His248 each coordinate Mn(2+). Position 270 (Ser270) interacts with substrate. A GTP-binding site is contributed by 271-276 (MCGKTS). The active site involves Cys272. Asp289 provides a ligand contact to Mn(2+). A compositionally biased stretch (basic and acidic residues) spans 360-374 (ENHSGKWWRGKKDSE). The interval 360 to 381 (ENHSGKWWRGKKDSEGNEISPS) is disordered. 384 to 386 (NAR) lines the substrate pocket. Arg386 and Arg418 together coordinate GTP.

Belongs to the phosphoenolpyruvate carboxykinase [GTP] family. It depends on Mn(2+) as a cofactor.

Its subcellular location is the cytoplasm. The enzyme catalyses oxaloacetate + GTP = phosphoenolpyruvate + GDP + CO2. It participates in carbohydrate biosynthesis; gluconeogenesis. Its function is as follows. Catalyzes the conversion of oxaloacetate (OAA) to phosphoenolpyruvate (PEP), the rate-limiting step in the metabolic pathway that produces glucose from lactate and other precursors derived from the citric acid cycle. The polypeptide is Phosphoenolpyruvate carboxykinase [GTP] (Thermococcus sibiricus (strain DSM 12597 / MM 739)).